The chain runs to 274 residues: Tropomyosin (274 aa).

The span at 1–35 (MKLEKDNAMDRADTLEQQNKEANNRAEKSEEEVHN) shows a compositional bias: basic and acidic residues. The disordered stretch occupies residues 1–45 (MKLEKDNAMDRADTLEQQNKEANNRAEKSEEEVHNLQKRMQQLEN). Residues 1-274 (MKLEKDNAMD…DQTFSELSGY (274 aa)) are a coiled coil.

This sequence belongs to the tropomyosin family. In terms of assembly, homodimer.

Its function is as follows. Tropomyosin, in association with the troponin complex, plays a central role in the calcium dependent regulation of muscle contraction. This chain is Tropomyosin, found in Metapenaeus ensis (Greasyback shrimp).